Here is a 429-residue protein sequence, read N- to C-terminus: UDP-N-acetylglucosamine 1-carboxyvinyltransferase (429 aa).

Phosphoenolpyruvate is bound at residue 22–23 (KN). Arginine 102 lines the UDP-N-acetyl-alpha-D-glucosamine pocket. Residue cysteine 126 is the Proton donor of the active site. Position 126 is a 2-(S-cysteinyl)pyruvic acid O-phosphothioketal (cysteine 126). UDP-N-acetyl-alpha-D-glucosamine contacts are provided by residues 131-135 (RPVDL), aspartate 316, and isoleucine 338.

The protein belongs to the EPSP synthase family. MurA subfamily.

It is found in the cytoplasm. The enzyme catalyses phosphoenolpyruvate + UDP-N-acetyl-alpha-D-glucosamine = UDP-N-acetyl-3-O-(1-carboxyvinyl)-alpha-D-glucosamine + phosphate. It functions in the pathway cell wall biogenesis; peptidoglycan biosynthesis. Its function is as follows. Cell wall formation. Adds enolpyruvyl to UDP-N-acetylglucosamine. The sequence is that of UDP-N-acetylglucosamine 1-carboxyvinyltransferase from Rhodopseudomonas palustris (strain TIE-1).